The primary structure comprises 37 residues: MKIRASVRKICEKCRLIRRRGRIIVICSNPKHKQRQG.

It belongs to the bacterial ribosomal protein bL36 family.

It is found in the plastid. Its subcellular location is the chloroplast. In Mesembryanthemum crystallinum (Common ice plant), this protein is Large ribosomal subunit protein bL36c.